The chain runs to 515 residues: Fatty acyl-CoA reductase 2 (515 aa).

Topologically, residues 1 to 465 (MSMIAAFYGG…AKQHLKRLRN (465 aa)) are cytoplasmic. A helical membrane pass occupies residues 466–484 (IHYLFNTALFLIAWRLLIA). The Peroxisomal portion of the chain corresponds to 485 to 515 (RSQVARNVWFFIVSFCYKFLSYFRASSTLNV).

This sequence belongs to the fatty acyl-CoA reductase family.

The protein localises to the peroxisome membrane. The catalysed reaction is a long-chain fatty acyl-CoA + 2 NADPH + 2 H(+) = a long-chain primary fatty alcohol + 2 NADP(+) + CoA. It carries out the reaction hexadecanoyl-CoA + 2 NADPH + 2 H(+) = hexadecan-1-ol + 2 NADP(+) + CoA. It catalyses the reaction octadecanoyl-CoA + 2 NADPH + 2 H(+) = octadecan-1-ol + 2 NADP(+) + CoA. The enzyme catalyses a very long-chain fatty acyl-CoA + 2 NADPH + 2 H(+) = a very long-chain primary fatty alcohol + 2 NADP(+) + CoA. The catalysed reaction is an ultra-long-chain fatty acyl-CoA + 2 NADPH + 2 H(+) = an ultra long-chain primary fatty alcohol + 2 NADP(+) + CoA. It carries out the reaction eicosanoyl-CoA + 2 NADPH + 2 H(+) = eicosan-1-ol + 2 NADP(+) + CoA. It catalyses the reaction docosanoyl-CoA + 2 NADPH + 2 H(+) = docosan-1-ol + 2 NADP(+) + CoA. The enzyme catalyses tetracosanoyl-CoA + 2 NADPH + 2 H(+) = tetracosan-1-ol + 2 NADP(+) + CoA. The catalysed reaction is hexacosanoyl-CoA + 2 NADPH + 2 H(+) = hexacosan-1-ol + 2 NADP(+) + CoA. It carries out the reaction octacosanoyl-CoA + 2 NADPH + 2 H(+) = octacosan-1-ol + 2 NADP(+) + CoA. It catalyses the reaction triacontanoyl-CoA + 2 NADPH + 2 H(+) = triacontan-1-ol + 2 NADP(+) + CoA. The enzyme catalyses 18-methylnonadecanoyl-CoA + 2 NADPH + 2 H(+) = 18-methylnonadecan-1-ol + 2 NADP(+) + CoA. The catalysed reaction is 20-methylheneicosanoyl-CoA + 2 NADPH + 2 H(+) = 20-methylheneicosan-1-ol + 2 NADP(+) + CoA. It carries out the reaction 22-methyltricosanoyl-CoA + 2 NADPH + 2 H(+) = 22-methyltricosan-1-ol + 2 NADP(+) + CoA. It catalyses the reaction 24-methylpentacosanoyl-CoA + 2 NADPH + 2 H(+) = 24-methylpentacosan-1-ol + 2 NADP(+) + CoA. Catalyzes the reduction of saturated but not unsaturated C16 or C18 fatty acyl-CoA to fatty alcohols (FAls). A lower activity can be observed with shorter fatty acyl-CoA substrates. Can produce very long-chain and ultra long-chain FAls, regardless of whether they have a straight or branched chain. Involved in the production of ether lipids/plasmalogens and wax monoesters whose synthesis requires FAls as substrates. The sequence is that of Fatty acyl-CoA reductase 2 from Bos taurus (Bovine).